The primary structure comprises 194 residues: MILMIDNYDSFTYNLVQYLGELGEELVVKRNDSITIDEIEELSPDFLMISPGPCSPDEAGISLEAIKHFAGKIPIFGVCLGHQSIAQVFGGDVVRAERLMHGKTSDIEHDGKTIFEGLKNPLVATRYHSLIVKPETLPSCFTVTAQTKEGEIMAIRHNDLPIEGVQFHPESIMTSFGKEMLRNFIETYRKEVIA.

Residues 1 to 194 (MILMIDNYDS…IETYRKEVIA (194 aa)) form the Glutamine amidotransferase type-1 domain. Catalysis depends on residues Cys79, His168, and Glu170.

In terms of assembly, monomer. Heterodimer consisting of two non-identical subunits: a glutamine amidotransferase subunit (PabA) and a aminodeoxychorismate synthase subunit (PabB).

The catalysed reaction is chorismate + L-glutamine = anthranilate + pyruvate + L-glutamate + H(+). It carries out the reaction chorismate + L-glutamine = 4-amino-4-deoxychorismate + L-glutamate. The protein operates within amino-acid biosynthesis; L-tryptophan biosynthesis; L-tryptophan from chorismate: step 1/5. It participates in cofactor biosynthesis; tetrahydrofolate biosynthesis; 4-aminobenzoate from chorismate: step 1/2. Part of a heterodimeric complex that catalyzes the two-step biosynthesis of 4-amino-4-deoxychorismate (ADC), a precursor of p-aminobenzoate (PABA) and tetrahydrofolate. In the first step, a glutamine amidotransferase (PabA) generates ammonia as a substrate that, along with chorismate, is used in the second step, catalyzed by aminodeoxychorismate synthase (PabB) to produce ADC. PabA converts glutamine into glutamate only in the presence of stoichiometric amounts of PabB. Also involved in the biosynthesis of anthranilate. Complements a glutamine amidotransferase-negative mutant. The chain is Aminodeoxychorismate/anthranilate synthase component 2 from Bacillus subtilis (strain 168).